Here is a 217-residue protein sequence, read N- to C-terminus: tRNA (guanine-N(7)-)-methyltransferase (217 aa).

S-adenosyl-L-methionine contacts are provided by Glu44, Glu69, Asp96, and Asp118. Residue Asp118 is part of the active site. Position 122 (Lys122) interacts with substrate. The segment at 124 to 129 (RHEKRR) is interaction with RNA. Substrate is bound by residues Asp154 and 191–194 (TEYE).

It belongs to the class I-like SAM-binding methyltransferase superfamily. TrmB family.

The enzyme catalyses guanosine(46) in tRNA + S-adenosyl-L-methionine = N(7)-methylguanosine(46) in tRNA + S-adenosyl-L-homocysteine. The protein operates within tRNA modification; N(7)-methylguanine-tRNA biosynthesis. In terms of biological role, catalyzes the formation of N(7)-methylguanine at position 46 (m7G46) in tRNA. This is tRNA (guanine-N(7)-)-methyltransferase from Bacillus velezensis (strain DSM 23117 / BGSC 10A6 / LMG 26770 / FZB42) (Bacillus amyloliquefaciens subsp. plantarum).